The sequence spans 448 residues: MTQYLPPNLLALFAAREPIPFMPPVDKLPHEKKSRGYLGVAKFMADFEDPKDTPLPKTVETRQERLERRRREKAEQVAYKLEREIALWDPTEIKNATEDPFRTLFIARINYDTSESKLRREFEFYGPIKKIVLIHDQESGKPKGYAFIEYEHERDMHAAYKHADGKKIDSKRVLVDVERARTVKGWLPRRLGGGLGGTRRGGNDVNIKHSGREDNERERERYRLEREREDREGPGRGGGSNGLDARPGRGFGAERRRSRSRERRDRERDRGRGAVASNGRSRSRSRERRKRRAGSRERYDEFDRRDRRDRERERDRDREREKKKKRSKSRERESSRERRERKRERRDRERGTGSGGDVKERKPDFRDMDVIKIKEEPVDDGYPTFDYQNATIKREIDDEDEEKYRPPPAHHNMFSVPPPPILGRGNASTNPNPDNGQQSSGDPSWWRQ.

Positions 91–201 (TEIKNATEDP…GGGLGGTRRG (111 aa)) are required for interaction with U1 RNA. The RRM domain occupies 102 to 180 (RTLFIARINY…KRVLVDVERA (79 aa)). Residues 188–448 (PRRLGGGLGG…SSGDPSWWRQ (261 aa)) are disordered. A compositionally biased stretch (gly residues) spans 191–200 (LGGGLGGTRR). Composition is skewed to basic and acidic residues over residues 206-234 (NIKH…REGP) and 262-272 (ERRDRERDRGR). The span at 281-293 (SRSRSRERRKRRA) shows a compositional bias: basic residues. Composition is skewed to basic and acidic residues over residues 294-320 (GSRE…DRER) and 346-376 (RDRE…IKEE). Positions 405–425 (RPPPAHHNMFSVPPPPILGRG) are mediates binding to Psi. Positions 426–448 (NASTNPNPDNGQQSSGDPSWWRQ) are enriched in polar residues.

As to quaternary structure, component of the U1 snRNP. Interacts with Psi; essential for alternative splicing of P-element transposase. Interacts with the SMN complex.

It localises to the nucleus speckle. It is found in the nucleus. The protein resides in the nucleoplasm. Functionally, mediates the splicing of pre-mRNA by binding to the stem loop I region of U1-snRNA. Required during oogenesis for nurse cell chromatin dispersal. The sequence is that of U1 small nuclear ribonucleoprotein 70 kDa (snRNP-U1-70K) from Drosophila melanogaster (Fruit fly).